We begin with the raw amino-acid sequence, 81 residues long: Large ribosomal subunit protein bL31B (81 aa).

This sequence belongs to the bacterial ribosomal protein bL31 family. Type B subfamily. Part of the 50S ribosomal subunit.

In Cutibacterium acnes (strain DSM 16379 / KPA171202) (Propionibacterium acnes), this protein is Large ribosomal subunit protein bL31B.